Here is a 163-residue protein sequence, read N- to C-terminus: Adenosine 5'-monophosphoramidase HINT2 (163 aa).

Residues 1–17 (MAAAVLLAVGLRAARRT) constitute a mitochondrion transit peptide. The residue at position 45 (Lys-45) is an N6-succinyllysine. Residues 55 to 163 (IFSRILDRSL…GGRQLQWPPG (109 aa)) form the HIT domain. 2 residues coordinate AMP: Ser-63 and Asp-80. N6-acetyllysine is present on Lys-119. The residue at position 128 (Lys-128) is an N6-acetyllysine; alternate. Lys-128 is modified (N6-succinyllysine; alternate). Residue Asn-136 coordinates AMP. Lys-139 carries the post-translational modification N6-acetyllysine. AMP contacts are provided by residues 142–145 (AQSV) and 149–151 (HIH). The Histidine triad motif signature appears at 147–151 (HLHIH). His-149 functions as the Tele-AMP-histidine intermediate in the catalytic mechanism.

Belongs to the HINT family.

The protein resides in the mitochondrion. The enzyme catalyses adenosine 5'-phosphoramidate + H2O = AMP + NH4(+). In terms of biological role, exhibits adenosine 5'-monophosphoramidase activity, hydrolyzing purine nucleotide phosphoramidates with a single phosphate group such as adenosine 5'monophosphoramidate (AMP-NH2) to yield AMP and NH2. Hydrolyzes adenosine 5'-O-p-nitrophenylphosphoramidate (AMP-pNA). May be involved in steroid biosynthesis. May play a role in apoptosis. The polypeptide is Adenosine 5'-monophosphoramidase HINT2 (Mus musculus (Mouse)).